Reading from the N-terminus, the 456-residue chain is RuvB-like 1 (456 aa).

K2 is covalently cross-linked (Glycyl lysine isopeptide (Lys-Gly) (interchain with G-Cter in SUMO2)). ATP is bound at residue 70 to 77 (GPPGTGKT). Residue K225 forms a Glycyl lysine isopeptide (Lys-Gly) (interchain with G-Cter in SUMO1); alternate linkage. A Glycyl lysine isopeptide (Lys-Gly) (interchain with G-Cter in SUMO2); alternate cross-link involves residue K225. K445 participates in a covalent cross-link: Glycyl lysine isopeptide (Lys-Gly) (interchain with G-Cter in SUMO2). K453 is modified (N6-acetyllysine).

This sequence belongs to the RuvB family. In terms of assembly, forms homohexameric rings. Can form a dodecamer with RUVBL2 made of two stacked hexameric rings; however, even though RUVBL1 and RUVBL2 are present in equimolar ratio, the oligomeric status of each hexamer is not known. Oligomerization may regulate binding to nucleic acids and conversely, binding to nucleic acids may affect the dodecameric assembly. Interaction of the complex with DHX34 results in conformational changes of the N-terminus of the RUVBL2 subunits, resulting in loss of nucleotide binding ability and ATP hydrolysis of the complex. Interacts with the transcriptional activation domain of MYC. Component of the RNA polymerase II holoenzyme complex. May also act to bridge the LEF1/TCF1-CTNNB1 complex and TBP. Component of the NuA4 histone acetyltransferase complex which contains the catalytic subunit KAT5/TIP60 and the subunits EP400, TRRAP/PAF400, BRD8/SMAP, EPC1, DMAP1/DNMAP1, RUVBL1/TIP49, RUVBL2, ING3, actin, ACTL6A/BAF53A, MORF4L1/MRG15, MORF4L2/MRGX, MRGBP, YEATS4/GAS41, VPS72/YL1 and MEAF6. The NuA4 complex interacts with MYC and the adenovirus E1A protein. RUVBL1 interacts with EP400. Component of a NuA4-related complex which contains EP400, TRRAP/PAF400, SRCAP, BRD8/SMAP, EPC1, DMAP1/DNMAP1, RUVBL1/TIP49, RUVBL2, actin, ACTL6A/BAF53A, VPS72 and YEATS4/GAS41. Component of the BAF53 complex, at least composed of ACTL6A/BAF53A, RUVBL1/TIP49, SMARCA2/BRM, and TRRAP/PAF400. Component of some MLL1/MLL complex, at least composed of the core components KMT2A/MLL1, ASH2L, HCFC1/HCF1, WDR5 and RBBP5, as well as the facultative components BACC1, CHD8, E2F6, HSP70, INO80C, KANSL1, LAS1L, MAX, MCRS1, MGA, MYST1/MOF, PELP1, PHF20, PRP31, RING2, RUVB1/TIP49A, RUVB2/TIP49B, SENP3, TAF1, TAF4, TAF6, TAF7, TAF9 and TEX10. Associates with alpha and gamma tubulins, particularly during metaphase and early anaphase. Interacts with NPAT. Component of the chromatin-remodeling INO80 complex; specifically part of a complex module associated with the helicase ATP-binding and the helicase C-terminal domain of INO80. Interacts with IGHMBP2. Interacts with OFD1. Interacts with HINT1. Component of a complex with USP49 and PSMC5. Component of a SWR1-like complex. Component of the R2TP complex composed at least of RUVBL1, RUVBL2, RPAP3 and PIHD1. Component of the PAQosome complex which is responsible for the biogenesis of several protein complexes and which consists of R2TP complex members RUVBL1, RUVBL2, RPAP3 and PIH1D1, URI complex members PFDN2, PFDN6, PDRG1, UXT and URI1 as well as ASDURF, POLR2E and DNAAF10/WDR92. Interacts with PIH1D1. Interacts with ITFG1. Interacts with WAC; WAC positively regulates MTOR activity by promoting the assembly of the TTT complex composed of TELO2, TTI1 and TTI2 and the RUVBL complex composed of RUVBL1 and RUVBL2 into the TTT-RUVBL complex which leads to the dimerization of the mTORC1 complex and its subsequent activation. The RUVBL1/RUVBL2 complex interacts with ZNHIT1 (via HIT-type zinc finger), ZNHIT3 (via HIT-type zinc finger), ZNHIT6 (via HIT-type zinc finger) and DDX59/ZNHIT5 (via HIT-type zinc finger) in the presence of ADP. Interacts with NOPCHAP1; the interaction is direct and disrupted upon ATP binding. Interacts with SMG1. Interacts with NOP2, NOP56 and NUFIP1.

It localises to the nucleus matrix. Its subcellular location is the nucleus. The protein localises to the nucleoplasm. The protein resides in the cytoplasm. It is found in the membrane. It localises to the cytoskeleton. Its subcellular location is the microtubule organizing center. The protein localises to the centrosome. The protein resides in the dynein axonemal particle. It carries out the reaction ATP + H2O = ADP + phosphate + H(+). Possesses single-stranded DNA-stimulated ATPase and ATP-dependent DNA helicase (3' to 5') activity; hexamerization is thought to be critical for ATP hydrolysis and adjacent subunits in the ring-like structure contribute to the ATPase activity. Component of the NuA4 histone acetyltransferase complex which is involved in transcriptional activation of select genes principally by acetylation of nucleosomal histones H4 and H2A. This modification may both alter nucleosome-DNA interactions and promote interaction of the modified histones with other proteins which positively regulate transcription. This complex may be required for the activation of transcriptional programs associated with oncogene and proto-oncogene mediated growth induction, tumor suppressor mediated growth arrest and replicative senescence, apoptosis, and DNA repair. The NuA4 complex ATPase and helicase activities seem to be, at least in part, contributed by the association of RUVBL1 and RUVBL2 with EP400. NuA4 may also play a direct role in DNA repair when recruited to sites of DNA damage. Component of a SWR1-like complex that specifically mediates the removal of histone H2A.Z/H2AZ1 from the nucleosome. Proposed core component of the chromatin remodeling INO80 complex which exhibits DNA- and nucleosome-activated ATPase activity and catalyzes ATP-dependent nucleosome sliding. Plays an essential role in oncogenic transformation by MYC and also modulates transcriptional activation by the LEF1/TCF1-CTNNB1 complex. Essential for cell proliferation. May be able to bind plasminogen at cell surface and enhance plasminogen activation. The protein is RuvB-like 1 (Ruvbl1) of Mus musculus (Mouse).